A 248-amino-acid chain; its full sequence is 3-deoxy-manno-octulosonate cytidylyltransferase (248 aa).

This sequence belongs to the KdsB family.

The protein resides in the cytoplasm. The catalysed reaction is 3-deoxy-alpha-D-manno-oct-2-ulosonate + CTP = CMP-3-deoxy-beta-D-manno-octulosonate + diphosphate. Its pathway is nucleotide-sugar biosynthesis; CMP-3-deoxy-D-manno-octulosonate biosynthesis; CMP-3-deoxy-D-manno-octulosonate from 3-deoxy-D-manno-octulosonate and CTP: step 1/1. The protein operates within bacterial outer membrane biogenesis; lipopolysaccharide biosynthesis. In terms of biological role, activates KDO (a required 8-carbon sugar) for incorporation into bacterial lipopolysaccharide in Gram-negative bacteria. This chain is 3-deoxy-manno-octulosonate cytidylyltransferase, found in Escherichia coli (strain K12 / MC4100 / BW2952).